Here is a 180-residue protein sequence, read N- to C-terminus: Probable RNA 2'-phosphotransferase (180 aa).

Belongs to the KptA/TPT1 family.

Functionally, removes the 2'-phosphate from RNA via an intermediate in which the phosphate is ADP-ribosylated by NAD followed by a presumed transesterification to release the RNA and generate ADP-ribose 1''-2''-cyclic phosphate (APPR&gt;P). May function as an ADP-ribosylase. The sequence is that of Probable RNA 2'-phosphotransferase from Pectobacterium atrosepticum (strain SCRI 1043 / ATCC BAA-672) (Erwinia carotovora subsp. atroseptica).